The chain runs to 654 residues: Meiotically up-regulated gene 24 protein (654 aa).

An RRM 1 domain is found at 299–355 (RNVFIGNLPSSYHEKEIEEAFGKFGKIEHIKILSKKNIAFVHFLNIRDAIKVVRTLS). The disordered stretch occupies residues 383–404 (SCFTSKQNPDTTSDRCRQQESK). Polar residues predominate over residues 384-393 (CFTSKQNPDT). The segment covering 394–404 (TSDRCRQQESK) has biased composition (basic and acidic residues). 2 consecutive RRM domains span residues 409–482 (RTVF…WGKE) and 500–571 (RNVY…YAPD).

Its subcellular location is the cytoplasm. In terms of biological role, has a role in meiosis. The polypeptide is Meiotically up-regulated gene 24 protein (mug24) (Schizosaccharomyces pombe (strain 972 / ATCC 24843) (Fission yeast)).